A 154-amino-acid chain; its full sequence is Myoglobin (154 aa).

In terms of domain architecture, Globin spans 2–148 (GLSDGEWQLV…FRNEMAAQYK (147 aa)). Serine 4 carries the post-translational modification Phosphoserine. A nitrite-binding site is contributed by histidine 65. Histidine 65 is a binding site for O2. Threonine 68 bears the Phosphothreonine mark. Histidine 94 provides a ligand contact to heme b.

As to quaternary structure, monomeric.

The protein localises to the cytoplasm. Its subcellular location is the sarcoplasm. It carries out the reaction Fe(III)-heme b-[protein] + nitric oxide + H2O = Fe(II)-heme b-[protein] + nitrite + 2 H(+). The enzyme catalyses H2O2 + AH2 = A + 2 H2O. Monomeric heme protein which primary function is to store oxygen and facilitate its diffusion within muscle tissues. Reversibly binds oxygen through a pentacoordinated heme iron and enables its timely and efficient release as needed during periods of heightened demand. Depending on the oxidative conditions of tissues and cells, and in addition to its ability to bind oxygen, it also has a nitrite reductase activity whereby it regulates the production of bioactive nitric oxide. Under stress conditions, like hypoxia and anoxia, it also protects cells against reactive oxygen species thanks to its pseudoperoxidase activity. In Bubalus bubalis (Domestic water buffalo), this protein is Myoglobin.